The sequence spans 687 residues: Calcium-binding protein SP84 (687 aa).

The N-terminal stretch at 1 to 19 (MMRAIYLLVVVCWAAAANA) is a signal peptide. EF-hand domains are found at residues 152–187 (LESD…HKNK), 257–292 (LTEI…TDDV), 406–441 (KTEA…PHMV), 476–511 (IENA…NNDA), and 579–614 (MTER…VKDL). 5 residues coordinate Ca(2+): Asp-592, Asn-594, Asp-596, Glu-598, and Asp-603.

As to expression, expressed in salivary glands where expression is strongest in type III cells in the posterior lobe of the principal glands (at protein level). Not expressed in midgut, Malpighian tubules or epidermis.

The protein localises to the secreted. Binds calcium. During feeding of the phloem sap, protein is injected into sieve tubes of rice plants. This process may suppress the sieve-element clogging and facilitate continuous ingestion from sieve tubes. The sequence is that of Calcium-binding protein SP84 from Nephotettix cincticeps (Green rice leafhopper).